The following is a 64-amino-acid chain: Prokaryotic ubiquitin-like protein Pup (64 aa).

Positions 1–37 (MAQEQTKRGGGGGDDDDIAGSTAAGQERREKLTEETD) are disordered. An ARC ATPase binding region spans residues 21 to 58 (STAAGQERREKLTEETDDLLDEIDDVLEENAEDFVRAY). A coiled-coil region spans residues 23–52 (AAGQERREKLTEETDDLLDEIDDVLEENAE). Position 64 is a deamidated glutamine (Gln-64). An Isoglutamyl lysine isopeptide (Gln-Lys) (interchain with K-? in acceptor proteins) cross-link involves residue Gln-64.

Belongs to the prokaryotic ubiquitin-like protein family. As to quaternary structure, strongly interacts with the proteasome-associated ATPase ARC through a hydrophobic interface; the interacting region of Pup lies in its C-terminal half. There is one Pup binding site per ARC hexamer ring. Post-translationally, is modified by deamidation of its C-terminal glutamine to glutamate by the deamidase Dop, a prerequisite to the subsequent pupylation process.

Its pathway is protein degradation; proteasomal Pup-dependent pathway. Protein modifier that is covalently attached to lysine residues of substrate proteins, thereby targeting them for proteasomal degradation. The tagging system is termed pupylation. The chain is Prokaryotic ubiquitin-like protein Pup from Mycobacterium tuberculosis (strain ATCC 25177 / H37Ra).